Here is a 495-residue protein sequence, read N- to C-terminus: Probable serine/threonine-protein kinase DDB_G0292354 (495 aa).

The Protein kinase domain maps to 16 to 275 (WTVVKKIGQG…PNYVFLQTLL (260 aa)). ATP-binding positions include 22-30 (IGQGAFGEI) and Lys45. Residue Asp136 is the Proton acceptor of the active site. A disordered region spans residues 293–469 (EVQTNSGASS…NGNGSNSQPI (177 aa)). 2 stretches are compositionally biased toward low complexity: residues 295–333 (QTNS…NSSA) and 354–364 (NNSNNNNNNNN). Over residues 385 to 395 (ESNSQIANSSE) the composition is skewed to polar residues. The segment covering 435–466 (SNNNNINNNNNNYNNNNNNNNNSHMNGNGSNS) has biased composition (low complexity).

The protein belongs to the protein kinase superfamily. CK1 Ser/Thr protein kinase family.

In Dictyostelium discoideum (Social amoeba), this protein is Probable serine/threonine-protein kinase DDB_G0292354.